We begin with the raw amino-acid sequence, 484 residues long: Protein nucleotidyltransferase YdiU (484 aa).

Positions 81, 83, 84, 103, 115, 116, 166, and 173 each coordinate ATP. The Proton acceptor role is filled by D244. Mg(2+) is bound by residues N245 and D254. An ATP-binding site is contributed by D254.

This sequence belongs to the SELO family. Requires Mg(2+) as cofactor. Mn(2+) serves as cofactor.

The catalysed reaction is L-seryl-[protein] + ATP = 3-O-(5'-adenylyl)-L-seryl-[protein] + diphosphate. It carries out the reaction L-threonyl-[protein] + ATP = 3-O-(5'-adenylyl)-L-threonyl-[protein] + diphosphate. It catalyses the reaction L-tyrosyl-[protein] + ATP = O-(5'-adenylyl)-L-tyrosyl-[protein] + diphosphate. The enzyme catalyses L-histidyl-[protein] + UTP = N(tele)-(5'-uridylyl)-L-histidyl-[protein] + diphosphate. The catalysed reaction is L-seryl-[protein] + UTP = O-(5'-uridylyl)-L-seryl-[protein] + diphosphate. It carries out the reaction L-tyrosyl-[protein] + UTP = O-(5'-uridylyl)-L-tyrosyl-[protein] + diphosphate. In terms of biological role, nucleotidyltransferase involved in the post-translational modification of proteins. It can catalyze the addition of adenosine monophosphate (AMP) or uridine monophosphate (UMP) to a protein, resulting in modifications known as AMPylation and UMPylation. The sequence is that of Protein nucleotidyltransferase YdiU from Shewanella putrefaciens (strain CN-32 / ATCC BAA-453).